Reading from the N-terminus, the 38-residue chain is Large ribosomal subunit protein bL36 (38 aa).

It belongs to the bacterial ribosomal protein bL36 family.

This chain is Large ribosomal subunit protein bL36, found in Pelodictyon phaeoclathratiforme (strain DSM 5477 / BU-1).